Here is a 31-residue protein sequence, read N- to C-terminus: Cyclotide mden-J (31 aa).

Positions 1 to 31 (GSIPCGESCVYIPCISSIVGCACKSKVCYKN) form a cross-link, cyclopeptide (Gly-Asn). Cystine bridges form between Cys-5/Cys-21, Cys-9/Cys-23, and Cys-14/Cys-28.

The protein belongs to the cyclotide family. Bracelet subfamily. In terms of processing, this is a cyclic peptide.

Probably participates in a plant defense mechanism. The sequence is that of Cyclotide mden-J from Melicytus dentatus (Tree violet).